We begin with the raw amino-acid sequence, 70 residues long: Ubiquinol-cytochrome c reductase complex assembly factor 5 (70 aa).

Residues 1-19 lie on the Mitochondrial matrix side of the membrane; the sequence is MFTRAQVRRILQRVPGKQR. A helical transmembrane segment spans residues 20–41; sequence FGIYRFLPFFFVLGGTMEWIMI. The Mitochondrial intermembrane portion of the chain corresponds to 42–70; that stretch reads KVRVGQETFYDVYRRKASERQYQRRLEDE.

It belongs to the UQCC5 family. As to quaternary structure, associates with the mitochondrial ribosome. Interacts with UQCC6. Interacts with MT-CYB; interacts with newly synthesizes MT-CYB. Forms a complex, named COMB/coordinator of mitochondrial CYTB biogenesis, composed of UQCC1, UQCC2, UQCC4, UQCC5 and UQCC6; regulates MT-CYB synthesis and promotes its membrane insertion.

It is found in the mitochondrion inner membrane. Its function is as follows. Required for the assembly and stability of the mitochondrial ubiquinol-cytochrome c reductase complex (complex III (CIII) or cytochrome b-c1 complex), a multisubunit transmembrane complex that is part of the mitochondrial electron transport chain (ETC) which drives oxidative phosphorylation. Mediates early complex III biogenesis. Participates in regulating the levels of electron transport chain proteins, and therefore energy supply, in response to changes in energy demand. Also involved in the first steps of cytochrome c oxidase complex (complex IV) assembly. In Homo sapiens (Human), this protein is Ubiquinol-cytochrome c reductase complex assembly factor 5.